Consider the following 874-residue polypeptide: Alanine--tRNA ligase (874 aa).

Zn(2+)-binding residues include His563, His567, Cys665, and His669.

This sequence belongs to the class-II aminoacyl-tRNA synthetase family. Requires Zn(2+) as cofactor.

It localises to the cytoplasm. It catalyses the reaction tRNA(Ala) + L-alanine + ATP = L-alanyl-tRNA(Ala) + AMP + diphosphate. Catalyzes the attachment of alanine to tRNA(Ala) in a two-step reaction: alanine is first activated by ATP to form Ala-AMP and then transferred to the acceptor end of tRNA(Ala). Also edits incorrectly charged Ser-tRNA(Ala) and Gly-tRNA(Ala) via its editing domain. The protein is Alanine--tRNA ligase of Haemophilus influenzae (strain PittGG).